The chain runs to 358 residues: UDP-N-acetylglucosamine--N-acetylmuramyl-(pentapeptide) pyrophosphoryl-undecaprenol N-acetylglucosamine transferase (358 aa).

Residues T11–G13, N120, R161, S188, and Q282 contribute to the UDP-N-acetyl-alpha-D-glucosamine site.

The protein belongs to the glycosyltransferase 28 family. MurG subfamily.

Its subcellular location is the cell inner membrane. The catalysed reaction is di-trans,octa-cis-undecaprenyl diphospho-N-acetyl-alpha-D-muramoyl-L-alanyl-D-glutamyl-meso-2,6-diaminopimeloyl-D-alanyl-D-alanine + UDP-N-acetyl-alpha-D-glucosamine = di-trans,octa-cis-undecaprenyl diphospho-[N-acetyl-alpha-D-glucosaminyl-(1-&gt;4)]-N-acetyl-alpha-D-muramoyl-L-alanyl-D-glutamyl-meso-2,6-diaminopimeloyl-D-alanyl-D-alanine + UDP + H(+). It functions in the pathway cell wall biogenesis; peptidoglycan biosynthesis. In terms of biological role, cell wall formation. Catalyzes the transfer of a GlcNAc subunit on undecaprenyl-pyrophosphoryl-MurNAc-pentapeptide (lipid intermediate I) to form undecaprenyl-pyrophosphoryl-MurNAc-(pentapeptide)GlcNAc (lipid intermediate II). This is UDP-N-acetylglucosamine--N-acetylmuramyl-(pentapeptide) pyrophosphoryl-undecaprenol N-acetylglucosamine transferase from Synechococcus sp. (strain CC9605).